Here is a 62-residue protein sequence, read N- to C-terminus: Short neurotoxin 1 (62 aa).

The tract at residues 1–20 is disordered; sequence LECHNQQSSEPPTTTRCSGG. Cystine bridges form between Cys3-Cys24, Cys17-Cys41, Cys43-Cys54, and Cys55-Cys60.

This sequence belongs to the three-finger toxin family. Short-chain subfamily. Type I alpha-neurotoxin sub-subfamily. Expressed by the venom gland.

It localises to the secreted. Binds to muscle nicotinic acetylcholine receptor (nAChR) and inhibit acetylcholine from binding to the receptor, thereby impairing neuromuscular transmission. The chain is Short neurotoxin 1 from Naja mossambica (Mozambique spitting cobra).